The following is a 227-amino-acid chain: Phosphoribosylformylglycinamidine synthase subunit PurQ (227 aa).

The Glutamine amidotransferase type-1 domain occupies 2-226 (KFAVIQFPGS…VKAWKEEQVN (225 aa)). Cysteine 86 acts as the Nucleophile in catalysis. Active-site residues include histidine 195 and glutamate 197.

In terms of assembly, part of the FGAM synthase complex composed of 1 PurL, 1 PurQ and 2 PurS subunits.

Its subcellular location is the cytoplasm. The enzyme catalyses N(2)-formyl-N(1)-(5-phospho-beta-D-ribosyl)glycinamide + L-glutamine + ATP + H2O = 2-formamido-N(1)-(5-O-phospho-beta-D-ribosyl)acetamidine + L-glutamate + ADP + phosphate + H(+). It carries out the reaction L-glutamine + H2O = L-glutamate + NH4(+). It functions in the pathway purine metabolism; IMP biosynthesis via de novo pathway; 5-amino-1-(5-phospho-D-ribosyl)imidazole from N(2)-formyl-N(1)-(5-phospho-D-ribosyl)glycinamide: step 1/2. Functionally, part of the phosphoribosylformylglycinamidine synthase complex involved in the purines biosynthetic pathway. Catalyzes the ATP-dependent conversion of formylglycinamide ribonucleotide (FGAR) and glutamine to yield formylglycinamidine ribonucleotide (FGAM) and glutamate. The FGAM synthase complex is composed of three subunits. PurQ produces an ammonia molecule by converting glutamine to glutamate. PurL transfers the ammonia molecule to FGAR to form FGAM in an ATP-dependent manner. PurS interacts with PurQ and PurL and is thought to assist in the transfer of the ammonia molecule from PurQ to PurL. The protein is Phosphoribosylformylglycinamidine synthase subunit PurQ of Listeria monocytogenes serotype 4b (strain CLIP80459).